Reading from the N-terminus, the 372-residue chain is Cytochrome b (372 aa).

4 helical membrane passes run 25–45, 69–90, 105–125, and 170–190; these read FGSM…FLAI, WIMQ…YIHI, WLSG…GYVL, and FFAL…IHII. Heme b is bound by residues His75 and His89. The heme b site is built by His174 and His188. Position 193 (His193) interacts with a ubiquinone. 4 helical membrane-spanning segments follow: residues 218–238, 280–300, 312–332, and 339–358; these read YKDM…LSFS, LGGT…PFTH, LSQI…WTAT, and FISI…IMNP.

The protein belongs to the cytochrome b family. In terms of assembly, the cytochrome bc1 complex contains 3 respiratory subunits (MT-CYB, CYC1 and UQCRFS1), 2 core proteins (UQCRC1 and UQCRC2) and probably 6 low-molecular weight proteins. It depends on heme b as a cofactor.

The protein resides in the mitochondrion inner membrane. Functionally, component of the ubiquinol-cytochrome c reductase complex (complex III or cytochrome b-c1 complex) that is part of the mitochondrial respiratory chain. The b-c1 complex mediates electron transfer from ubiquinol to cytochrome c. Contributes to the generation of a proton gradient across the mitochondrial membrane that is then used for ATP synthesis. The chain is Cytochrome b (MT-CYB) from Walterinnesia aegyptia (Desert black snake).